Consider the following 384-residue polypeptide: Stress response protein bis1 (384 aa).

2 disordered regions span residues Met-1–Gln-22 and Ser-344–Val-384.

This sequence belongs to the ESS2 family. In terms of assembly, heterodimer with ish1.

It localises to the nucleus. It is found in the cytoplasm. Its subcellular location is the cytoskeleton. The protein resides in the spindle. Functionally, has a role in maintaining cell viability during stationary phase induced by stress response. May be involved in pre-mRNA splicing. The protein is Stress response protein bis1 (bis1) of Schizosaccharomyces pombe (strain 972 / ATCC 24843) (Fission yeast).